The sequence spans 173 residues: Alpha-crystallin A chain (173 aa).

Methionine 1 is subject to N-acetylmethionine. The tract at residues 1-63 (MDIAIQHPWF…RTVLDSGISE (63 aa)) is required for complex formation with BFSP1 and BFSP2. At glutamine 6 the chain carries Deamidated glutamine; partial. Phosphoserine is present on serine 45. At glutamine 50 the chain carries Deamidated glutamine; partial. One can recognise a sHSP domain in the interval 52-162 (LFRTVLDSGI…GHSERAIPVS (111 aa)). Lysine 70 carries the post-translational modification N6-acetyllysine. Glutamine 90 carries the deamidated glutamine; partial modification. The residue at position 99 (lysine 99) is an N6-acetyllysine. A Zn(2+)-binding site is contributed by histidine 100. Asparagine 101 bears the Deamidated asparagine; partial mark. The Zn(2+) site is built by glutamate 102 and histidine 107. Position 122 is a phosphoserine (serine 122). A Deamidated asparagine; partial modification is found at asparagine 123. Residues 144 to 173 (PKVPSGMDAGHSERAIPVSREEKPSSAPSS) are disordered. The segment covering 153–167 (GHSERAIPVSREEKP) has biased composition (basic and acidic residues). Histidine 154 lines the Zn(2+) pocket. The O-linked (GlcNAc) serine glycan is linked to serine 162.

This sequence belongs to the small heat shock protein (HSP20) family. As to quaternary structure, heteromer composed of three CRYAA and one CRYAB subunits. Inter-subunit bridging via zinc ions enhances stability, which is crucial as there is no protein turn over in the lens. Can also form homodimers and homotetramers (dimers of dimers) which serve as the building blocks of homooligomers. Within homooligomers, the zinc-binding motif is created from residues of 3 different molecules. His-100 and Glu-102 from one molecule are ligands of the zinc ion, and His-107 and His-154 residues from additional molecules complete the site with tetrahedral coordination geometry. Part of a complex required for lens intermediate filament formation composed of BFSP1, BFSP2 and CRYAA. In terms of processing, acetylation at Lys-70 may increase chaperone activity. Post-translationally, undergoes age-dependent proteolytical cleavage at the C-terminus.

Its subcellular location is the cytoplasm. It localises to the nucleus. Contributes to the transparency and refractive index of the lens. Acts as a chaperone, preventing aggregation of various proteins under a wide range of stress conditions. Required for the correct formation of lens intermediate filaments as part of a complex composed of BFSP1, BFSP2 and CRYAA. The sequence is that of Alpha-crystallin A chain (CRYAA) from Balaenoptera acutorostrata (Common minke whale).